Reading from the N-terminus, the 547-residue chain is Cytochrome P450 monooxygenase cpsD (547 aa).

The helical transmembrane segment at 18–38 (LTGAALVVTLITSVIIVAADL) threads the bilayer. A heme-binding site is contributed by C476. The disordered stretch occupies residues 528–547 (RRRDARRTHEALGSKLKPEE). Residues 534-547 (RTHEALGSKLKPEE) show a composition bias toward basic and acidic residues.

This sequence belongs to the cytochrome P450 family. Heme is required as a cofactor.

Its subcellular location is the membrane. It carries out the reaction campesine B + campesine C + reduced [NADPH--hemoprotein reductase] + O2 = campesine D + oxidized [NADPH--hemoprotein reductase] + 2 H2O + 2 H(+). The enzyme catalyses 2 campesine B + reduced [NADPH--hemoprotein reductase] + O2 = campesine F + oxidized [NADPH--hemoprotein reductase] + 2 H2O + H(+). It catalyses the reaction campesine C + campesine A + reduced [NADPH--hemoprotein reductase] + O2 = campesine E + oxidized [NADPH--hemoprotein reductase] + 2 H2O + 2 H(+). It functions in the pathway alkaloid biosynthesis. Functionally, cytochrome P450 monooxygenase; part of the gene cluster that mediates the biosynthesis of campesine G, a dimeric indole piperazine alkaloid that shows good insecticidal activity Galleria mellonella. Within the pathway, cpsD acts as a dimerase that simultaneously catalyzes one C-C bond (C3-C3') and two C-N bonds (C2-N16' and C2'-N16) coupling reactions between campesines B and C to produce a heterodimer with unexpected 6/5/6/6/6/6/5/6 eight-ring scaffold called campesine D. CpsD is also able to catalyze oxidative heterocoupling od campesines A with B to produce campesine F and campesines A with C to produce campesine E. The non-canonical non-ribosomal peptide synthetase cpsA catalyzes the first steps of the pathway by producing L-tryptophanal and L-valinal from their respective amino-acids. These products condensate spontaneously to form trypyl-valyl pyrazine also known as didehydrocampesine A. The NmrA-like family domain-containing oxidoreductase cpsB is the next enzyme in cps pathway and reduces the unstable didehydrocampesine A to campesine A. The methyltransferase cpsF and the acetyltransferase cpsE both recognize N13 of piperazine ring to carry out methylation and acetylation of campesine A to produce campesine C and B, respectively. The cytochrome P450 monooxygenase cpsD then acts as a dimerase that catalyzes oxidative heterocoupling between campesine B and C to produce heterodimers with unexpected 6/5/6/6/6/6/5/6 eight-ring scaffold called campesine D. Finally,the cytochrome P450 monooxygenase cpsC is a regioselective dehydrogenase that catalyzes dehydrogenation reaction towards C2-N1 to produce campesine G. The sequence is that of Cytochrome P450 monooxygenase cpsD from Aspergillus campestris (strain IBT 28561).